We begin with the raw amino-acid sequence, 129 residues long: uncharacterized protein (129 aa).

A disordered region spans residues 52–94 (NGDEESQDDWLNDLLKSDGDGGKAGPVDPSHPMETTTTDHSSQ). Residues 53 to 62 (GDEESQDDWL) show a composition bias toward acidic residues. A compositionally biased stretch (polar residues) spans 84 to 94 (METTTTDHSSQ).

This is an uncharacterized protein from Caenorhabditis elegans.